The chain runs to 180 residues: Segregation and condensation protein B (180 aa).

The protein belongs to the ScpB family. As to quaternary structure, homodimer. Homodimerization may be required to stabilize the binding of ScpA to the Smc head domains. Component of a cohesin-like complex composed of ScpA, ScpB and the Smc homodimer, in which ScpA and ScpB bind to the head domain of Smc. The presence of the three proteins is required for the association of the complex with DNA.

The protein resides in the cytoplasm. Its function is as follows. Participates in chromosomal partition during cell division. May act via the formation of a condensin-like complex containing Smc and ScpA that pull DNA away from mid-cell into both cell halves. This is Segregation and condensation protein B from Staphylococcus aureus (strain MSSA476).